We begin with the raw amino-acid sequence, 242 residues long: MPPEAPRRGDPSRVLLDHAYLLHRRDYRETSLLLELFTLRHGRIGVIAKGARRGRQGFAAVLQPFVPLLVSWSGRGELANLNHAEAAGIGVRLQHTALFCGFYLNELLMRLLPPHDPCPELFGTYRGGLETLAAGEDLETALRSFELSLLEAIGYGLQLRVEAESGEAIRPERLYSYRIDAGPVPAGDEADAVHGMTLLALRDRRFDTSQTRTEAKRLMRRIIAHHLNGRALKSRELFRSSS.

The protein belongs to the RecO family.

In terms of biological role, involved in DNA repair and RecF pathway recombination. This chain is DNA repair protein RecO, found in Methylococcus capsulatus (strain ATCC 33009 / NCIMB 11132 / Bath).